The chain runs to 220 residues: Putative cobalt transport protein CbiM (220 aa).

Helical transmembrane passes span Gly-6–Tyr-26, Ala-43–Val-63, Gly-74–Leu-94, Leu-98–Ile-118, and Ile-182–Ile-202.

Belongs to the CbiM family. In terms of assembly, forms an energy-coupling factor (ECF) transporter complex composed of an ATP-binding protein (A component, CbiO), a transmembrane protein (T component, CbiQ) and 2 possible substrate-capture proteins (S components, CbiM and CbiN) of unknown stoichimetry.

The protein resides in the cell membrane. Its pathway is cofactor biosynthesis; adenosylcobalamin biosynthesis. Part of the energy-coupling factor (ECF) transporter complex CbiMNOQ involved in cobalt import. The polypeptide is Putative cobalt transport protein CbiM (Haloquadratum walsbyi (strain DSM 16790 / HBSQ001)).